A 263-amino-acid polypeptide reads, in one-letter code: Chorismate mutase 2 (263 aa).

One can recognise a Chorismate mutase domain in the interval 3 to 256 (CGDYDDKLSL…QVEYLLRRLD (254 aa)).

Homodimer. Expressed in root, stem, stigma, anther, leaf, petal tube, petal limb and sepal tissues with highest levels in petal tubes and stems.

It localises to the cytoplasm. The protein localises to the cytosol. It carries out the reaction chorismate = prephenate. It functions in the pathway metabolic intermediate biosynthesis; prephenate biosynthesis; prephenate from chorismate: step 1/1. Its activity is regulated as follows. No allosteric regulation. In terms of biological role, mediates the conversion of chorismate to prephenate. This Petunia hybrida (Petunia) protein is Chorismate mutase 2.